A 287-amino-acid chain; its full sequence is Efem/EfeO family lipoprotein (287 aa).

Positions 1-17 are cleaved as a signal peptide; the sequence is MKKLPTILLASSLLLAA. C18 is lipidated: N-palmitoyl cysteine. C18 carries the S-diacylglycerol cysteine lipid modification. The segment at 20-50 is disordered; the sequence is NNSHSDDNSNKDKQSQSSKGENKASLQKATK. The span at 23–33 shows a compositional bias: basic and acidic residues; sequence HSDDNSNKDKQ.

The protein belongs to the EfeM/EfeO family.

It is found in the cell membrane. This Staphylococcus haemolyticus (strain JCSC1435) protein is Efem/EfeO family lipoprotein.